Consider the following 425-residue polypeptide: Glucose-6-phosphate 1-dehydrogenase (425 aa).

NADP(+) contacts are provided by R44 and K135. Substrate is bound by residues H165, K169, E201, and D220. H225 (proton acceptor) is an active-site residue. K311 contributes to the substrate binding site.

It belongs to the glucose-6-phosphate dehydrogenase family.

It catalyses the reaction D-glucose 6-phosphate + NADP(+) = 6-phospho-D-glucono-1,5-lactone + NADPH + H(+). The protein operates within carbohydrate degradation; pentose phosphate pathway; D-ribulose 5-phosphate from D-glucose 6-phosphate (oxidative stage): step 1/3. Its function is as follows. Catalyzes the oxidation of glucose 6-phosphate to 6-phosphogluconolactone. The polypeptide is Glucose-6-phosphate 1-dehydrogenase (Helicobacter pylori (strain ATCC 700392 / 26695) (Campylobacter pylori)).